Here is an 87-residue protein sequence, read N- to C-terminus: Phosphoribosyl-ATP pyrophosphatase (87 aa).

This sequence belongs to the PRA-PH family.

It is found in the cytoplasm. The catalysed reaction is 1-(5-phospho-beta-D-ribosyl)-ATP + H2O = 1-(5-phospho-beta-D-ribosyl)-5'-AMP + diphosphate + H(+). It participates in amino-acid biosynthesis; L-histidine biosynthesis; L-histidine from 5-phospho-alpha-D-ribose 1-diphosphate: step 2/9. In Bifidobacterium adolescentis (strain ATCC 15703 / DSM 20083 / NCTC 11814 / E194a), this protein is Phosphoribosyl-ATP pyrophosphatase.